Here is a 149-residue protein sequence, read N- to C-terminus: FAD synthase (149 aa).

ATP-binding positions include 9 to 10, 14 to 17, Asp93, and Tyr120; these read VF and HPGH.

The protein belongs to the archaeal FAD synthase family. As to quaternary structure, homodimer. A divalent metal cation serves as cofactor.

It carries out the reaction FMN + ATP + H(+) = FAD + diphosphate. The protein operates within cofactor biosynthesis; FAD biosynthesis; FAD from FMN: step 1/1. Its function is as follows. Catalyzes the transfer of the AMP portion of ATP to flavin mononucleotide (FMN) to produce flavin adenine dinucleotide (FAD) coenzyme. This is FAD synthase from Aciduliprofundum boonei (strain DSM 19572 / T469).